A 332-amino-acid chain; its full sequence is tRNA-dihydrouridine synthase B (332 aa).

FMN is bound by residues 16–18 and Gln-70; that span reads PMA. The active-site Proton donor is the Cys-100. FMN contacts are provided by residues Lys-139, 200-202, and 224-225; these read NGD and GR.

It belongs to the Dus family. DusB subfamily. It depends on FMN as a cofactor.

The catalysed reaction is a 5,6-dihydrouridine in tRNA + NAD(+) = a uridine in tRNA + NADH + H(+). It catalyses the reaction a 5,6-dihydrouridine in tRNA + NADP(+) = a uridine in tRNA + NADPH + H(+). In terms of biological role, catalyzes the synthesis of 5,6-dihydrouridine (D), a modified base found in the D-loop of most tRNAs, via the reduction of the C5-C6 double bond in target uridines. The chain is tRNA-dihydrouridine synthase B from Xanthomonas axonopodis pv. citri (strain 306).